A 281-amino-acid chain; its full sequence is Lipoyl synthase (281 aa).

[4Fe-4S] cluster-binding residues include cysteine 37, cysteine 42, cysteine 48, cysteine 63, cysteine 67, cysteine 70, and serine 274. Residues 49–263 (WSRGTATFMI…RQQAVNKGFK (215 aa)) form the Radical SAM core domain.

The protein belongs to the radical SAM superfamily. Lipoyl synthase family. It depends on [4Fe-4S] cluster as a cofactor.

It localises to the cytoplasm. The enzyme catalyses [[Fe-S] cluster scaffold protein carrying a second [4Fe-4S](2+) cluster] + N(6)-octanoyl-L-lysyl-[protein] + 2 oxidized [2Fe-2S]-[ferredoxin] + 2 S-adenosyl-L-methionine + 4 H(+) = [[Fe-S] cluster scaffold protein] + N(6)-[(R)-dihydrolipoyl]-L-lysyl-[protein] + 4 Fe(3+) + 2 hydrogen sulfide + 2 5'-deoxyadenosine + 2 L-methionine + 2 reduced [2Fe-2S]-[ferredoxin]. It participates in protein modification; protein lipoylation via endogenous pathway; protein N(6)-(lipoyl)lysine from octanoyl-[acyl-carrier-protein]: step 2/2. Functionally, catalyzes the radical-mediated insertion of two sulfur atoms into the C-6 and C-8 positions of the octanoyl moiety bound to the lipoyl domains of lipoate-dependent enzymes, thereby converting the octanoylated domains into lipoylated derivatives. This chain is Lipoyl synthase, found in Parabacteroides distasonis (strain ATCC 8503 / DSM 20701 / CIP 104284 / JCM 5825 / NCTC 11152).